A 648-amino-acid chain; its full sequence is Indolepyruvate oxidoreductase subunit IorA (648 aa).

2 4Fe-4S ferredoxin-type domains span residues 585–614 (PIYQ…WDPE) and 616–645 (KKAK…KVRE). [4Fe-4S] cluster-binding residues include cysteine 594, cysteine 597, cysteine 600, cysteine 606, cysteine 625, cysteine 628, cysteine 631, and cysteine 635.

Heterodimer of the IorA and IorB subunits. Requires [4Fe-4S] cluster as cofactor.

It carries out the reaction indole-3-pyruvate + 2 oxidized [2Fe-2S]-[ferredoxin] + CoA = (indol-3-yl)acetyl-CoA + 2 reduced [2Fe-2S]-[ferredoxin] + CO2 + H(+). Functionally, catalyzes the ferredoxin-dependent oxidative decarboxylation of arylpyruvates. This is Indolepyruvate oxidoreductase subunit IorA (iorA) from Pyrococcus abyssi (strain GE5 / Orsay).